Consider the following 252-residue polypeptide: MSDWNPSLYLHFAAERSRPAVELLARVPLENIKYVADLGCGPGNSTALLHQRWPAARITGIDSSPAMIAEARSALPDCQFVEADIRNWQPEQALDLIFANASLQWLPDHYELFPHLVSLLNPQGVLAVQMPDNWLEPTHVLMREVAWEQNYPDRGREPLAGVHAYYDILSEAGCEVDIWRTTYYHQMPSHQAIIDWVTATGLRPWLQDLTESEQQLFLKRYHQMLEEQYPLQENGQILLAFPRLFIVARRME.

The protein belongs to the methyltransferase superfamily. Tam family.

Its subcellular location is the cytoplasm. It carries out the reaction trans-aconitate + S-adenosyl-L-methionine = (E)-3-(methoxycarbonyl)pent-2-enedioate + S-adenosyl-L-homocysteine. Catalyzes the S-adenosylmethionine monomethyl esterification of trans-aconitate. The polypeptide is Trans-aconitate 2-methyltransferase (Escherichia coli O139:H28 (strain E24377A / ETEC)).